Reading from the N-terminus, the 359-residue chain is 24-methylenesterol C-methyltransferase 3 (359 aa).

Residues 4–24 traverse the membrane as a helical segment; it reads VALYCTAGLIAGAVYWFICVL.

This sequence belongs to the class I-like SAM-binding methyltransferase superfamily. Erg6/SMT family.

It is found in the membrane. It carries out the reaction 24-methylidenelophenol + S-adenosyl-L-methionine = (Z)-24-ethylidenelophenol + S-adenosyl-L-homocysteine + H(+). The protein operates within steroid biosynthesis; sterol biosynthesis. Functionally, catalyzes the methyl transfer from S-adenosyl-methionine to the methylene group of 24-methylene lophenol to form 24-ethylidene lophenol. This Arabidopsis thaliana (Mouse-ear cress) protein is 24-methylenesterol C-methyltransferase 3 (SMT3).